The chain runs to 439 residues: ATP-dependent protease ATPase subunit HslU (439 aa).

Residues Ile17, 59–64 (GVGKTE), Asp251, Glu317, and Arg389 each bind ATP.

Belongs to the ClpX chaperone family. HslU subfamily. As to quaternary structure, a double ring-shaped homohexamer of HslV is capped on each side by a ring-shaped HslU homohexamer. The assembly of the HslU/HslV complex is dependent on binding of ATP.

The protein resides in the cytoplasm. Functionally, ATPase subunit of a proteasome-like degradation complex; this subunit has chaperone activity. The binding of ATP and its subsequent hydrolysis by HslU are essential for unfolding of protein substrates subsequently hydrolyzed by HslV. HslU recognizes the N-terminal part of its protein substrates and unfolds these before they are guided to HslV for hydrolysis. This is ATP-dependent protease ATPase subunit HslU from Campylobacter jejuni subsp. jejuni serotype O:6 (strain 81116 / NCTC 11828).